Consider the following 106-residue polypeptide: Putative double-stranded DNA mimic protein VV1_3059 (106 aa).

It belongs to the putative dsDNA mimic protein family.

Functionally, may act as a double-stranded DNA (dsDNA) mimic. Probably regulates the activity of a dsDNA-binding protein. The polypeptide is Putative double-stranded DNA mimic protein VV1_3059 (Vibrio vulnificus (strain CMCP6)).